The primary structure comprises 350 residues: Ion-translocating oxidoreductase complex subunit D (350 aa).

The next 4 helical transmembrane spans lie at 36-56 (FYFF…IALL), 68-88 (PIIS…IGVS), 89-109 (IPSI…IVIV), and 120-140 (IFNP…VQMT). Position 185 is an FMN phosphoryl threonine (T185). A run of 5 helical transmembrane segments spans residues 212 to 232 (GFGV…LAML), 239 to 259 (WQIS…GYLL), 265 to 285 (IGPL…FIAT), 291 to 311 (ATSV…VYVI), and 315 to 335 (GGYP…APFI).

Belongs to the NqrB/RnfD family. As to quaternary structure, the complex is composed of six subunits: RnfA, RnfB, RnfC, RnfD, RnfE and RnfG. It depends on FMN as a cofactor.

The protein resides in the cell inner membrane. In terms of biological role, part of a membrane-bound complex that couples electron transfer with translocation of ions across the membrane. The protein is Ion-translocating oxidoreductase complex subunit D of Shewanella piezotolerans (strain WP3 / JCM 13877).